We begin with the raw amino-acid sequence, 184 residues long: Gremlin-1 (184 aa).

A signal peptide spans 1–24; it reads MVRTLYAIGAVFLLTGFLLPTAEG. Positions 24-77 are disordered; sequence GRKRNRGSQGAIPPPDKDQPNDSEQMQTQQQSGSRHRERGKGTSMPAEEVLESS. N-linked (GlcNAc...) asparagine glycosylation is present at Asn-44. Polar residues predominate over residues 45-56; the sequence is DSEQMQTQQQSG. 4 cysteine pairs are disulfide-bonded: Cys-94-Cys-144, Cys-108-Cys-158, Cys-118-Cys-176, and Cys-122-Cys-178. Residues 94–184 form the CTCK domain; sequence CKTQPLKQTI…ECRCISIDLD (91 aa).

The protein belongs to the DAN family.

Its subcellular location is the secreted. Its function is as follows. Cytokine that may play a role in the development of the medial pallium and during optic nerve and pecten development by modulating BMP signaling. This chain is Gremlin-1 (GREM1), found in Gallus gallus (Chicken).